Consider the following 989-residue polypeptide: Phosphoenolpyruvate carboxylase (989 aa).

Catalysis depends on residues His175 and Lys630.

This sequence belongs to the PEPCase type 1 family. The cofactor is Mg(2+).

The enzyme catalyses oxaloacetate + phosphate = phosphoenolpyruvate + hydrogencarbonate. In terms of biological role, forms oxaloacetate, a four-carbon dicarboxylic acid source for the tricarboxylic acid cycle. The chain is Phosphoenolpyruvate carboxylase from Prochlorococcus marinus (strain MIT 9312).